Consider the following 1482-residue polypeptide: Glutamate receptor ionotropic, NMDA 2B (1482 aa).

The N-terminal stretch at 1 to 26 is a signal peptide; it reads MKPSAECCSPKFWLVLAVLAVSGSKA. The Extracellular portion of the chain corresponds to 27 to 557; the sequence is RSQKSAPSIG…SAFLEPFSAD (531 aa). An N-linked (GlcNAc...) asparagine glycan is attached at asparagine 74. Cysteine 86 and cysteine 321 form a disulfide bridge. The Zn(2+) site is built by histidine 127 and glutamate 284. Residues asparagine 341, asparagine 348, asparagine 444, and asparagine 491 are each glycosylated (N-linked (GlcNAc...) asparagine). Disulfide bonds link cysteine 429-cysteine 456 and cysteine 436-cysteine 457. L-glutamate is bound by residues threonine 514 and arginine 519. Asparagine 542 carries N-linked (GlcNAc...) asparagine glycosylation. A helical membrane pass occupies residues 558–576; the sequence is VWVMMFVMLLIVSAVAVFV. Residues 577-603 lie on the Cytoplasmic side of the membrane; the sequence is FEYFSPVGYNRCLADGREPGGPSFTIG. Residues 604 to 623 constitute an intramembrane region (discontinuously helical); the sequence is KAIWLLWGLVFNNSVPVQNP. Residues 604–623 are pore-forming; sequence KAIWLLWGLVFNNSVPVQNP. The Cytoplasmic portion of the chain corresponds to 624 to 630; that stretch reads KGTTSKI. A helical transmembrane segment spans residues 631–646; the sequence is MVSVWAFFAVIFLASY. Over 647–817 the chain is Extracellular; that stretch reads TANLAAFMIQ…VMSSQLDIDN (171 aa). N-linked (GlcNAc...) asparagine glycosylation occurs at asparagine 688. Residues 690–691 and aspartate 732 contribute to the L-glutamate site; that span reads ST. An intrachain disulfide couples cysteine 746 to cysteine 801. A helical transmembrane segment spans residues 818 to 837; that stretch reads MAGVFYMLGAAMALSLITFI. The Cytoplasmic segment spans residues 838 to 1482; it reads CEHLFYWQFR…EKLSSIESDV (645 aa). Residues serine 882, serine 886, serine 917, and serine 920 each carry the phosphoserine modification. Phosphotyrosine is present on residues tyrosine 962 and tyrosine 1039. Residues serine 1058, serine 1061, and serine 1064 each carry the phosphoserine modification. Residues 1074-1097 form a disordered region; it reads EGNAAKRRKQQYKDSLKKRPASAK. 2 positions are modified to phosphotyrosine: tyrosine 1109 and tyrosine 1133. Phosphoserine is present on serine 1143. Residue tyrosine 1155 is modified to Phosphotyrosine. A disordered region spans residues 1162–1194; that stretch reads FKRDSVSGGGPCTNRSHLKHGTGDKHGVVGGVP. 2 positions are modified to phosphoserine: serine 1255 and serine 1259. The span at 1266 to 1277 shows a compositional bias: low complexity; that stretch reads PAAPVAVSSNAS. The interval 1266-1301 is disordered; the sequence is PAAPVAVSSNASTTKYPQSPTNSKAQKKNRNKLRRQ. Residues 1278-1289 show a composition bias toward polar residues; it reads TTKYPQSPTNSK. Residues 1290–1301 are compositionally biased toward basic residues; sequence AQKKNRNKLRRQ. The tract at residues 1292–1304 is interaction with DAPK1; sequence KKNRNKLRRQHSY. The residue at position 1303 (serine 1303) is a Phosphoserine; by DAPK1. Tyrosine 1472 is subject to Phosphotyrosine. A PDZ-binding motif is present at residues 1480–1482; that stretch reads SDV.

It belongs to the glutamate-gated ion channel (TC 1.A.10.1) family. NR2B/GRIN2B subfamily. As to quaternary structure, heterotetramer. Forms heterotetrameric channels composed of two GluN1/zeta subunits (GRIN1), and two identical GluN2/epsilon subunits (GRIN2A, GRIN2B, GRIN2C or GRIN2D) or GluN3 subunits (GRIN3A or GRIN3B) (in vitro). Can also form heterotetrameric channels that contain at least two GluN1 subunits and at least two different GluN2 subunits (or a combination of one GluN2 and one GluN3 subunits) (in vitro). In vivo, the subunit composition may depend on the expression levels of the different subunits. Found in a complex with GRIN1, GRIN3A and PPP2CB. Interacts with MAGI3. Interacts with HIP1 and NETO1. Interacts with PDZ domains of PATJ, DLG3 and DLG4. Interacts with DAPK1. Found in a complex with GRIN1 and PRR7. Interacts with PRR7. Interacts with CAMK2A. Interacts with ARC; preventing ARC oligomerization. Interacts with TMEM25. Interacts (via the extreme C-terminus) with FRMPD2 (via the second PDZ domain); the interaction is direct and is likely to promote NMDAR-mediated neural signal transmission. GRIN2A binds FRMPD2 with lower affinity than GRIN2B. Interacts with FAM81A; the interaction facilitates condensate formation via liquid-liquid phase separation. In terms of processing, phosphorylated on tyrosine residues. Phosphorylation at Ser-1303 by DAPK1 enhances synaptic NMDA receptor channel activity. In terms of tissue distribution, detected in brain (at protein level). Detected throughout the brain, and in brain stem trigeminal nucleus. Detected in forebrain.

It is found in the cell membrane. The protein resides in the postsynaptic cell membrane. Its subcellular location is the cell projection. The protein localises to the dendrite. It localises to the late endosome. It is found in the lysosome. The protein resides in the cytoplasm. Its subcellular location is the cytoskeleton. The enzyme catalyses Ca(2+)(in) = Ca(2+)(out). The catalysed reaction is Na(+)(in) = Na(+)(out). It catalyses the reaction K(+)(in) = K(+)(out). Its function is as follows. Component of N-methyl-D-aspartate (NMDA) receptors (NMDARs) that function as heterotetrameric, ligand-gated cation channels with high calcium permeability and voltage-dependent block by Mg(2+). Participates in synaptic plasticity for learning and memory formation by contributing to the long-term depression (LTD) of hippocampus membrane currents. Channel activation requires binding of the neurotransmitter L-glutamate to the GluN2 subunit, glycine or D-serine binding to the GluN1 subunit, plus membrane depolarization to eliminate channel inhibition by Mg(2+). NMDARs mediate simultaneously the potasium efflux and the influx of calcium and sodium. Each GluN2 subunit confers differential attributes to channel properties, including activation, deactivation and desensitization kinetics, pH sensitivity, Ca2(+) permeability, and binding to allosteric modulators. In concert with DAPK1 at extrasynaptic sites, acts as a central mediator for stroke damage. Its phosphorylation at Ser-1303 by DAPK1 enhances synaptic NMDA receptor channel activity inducing injurious Ca2+ influx through them, resulting in an irreversible neuronal death. This Mus musculus (Mouse) protein is Glutamate receptor ionotropic, NMDA 2B.